Reading from the N-terminus, the 157-residue chain is SsrA-binding protein (157 aa).

This sequence belongs to the SmpB family.

It localises to the cytoplasm. In terms of biological role, required for rescue of stalled ribosomes mediated by trans-translation. Binds to transfer-messenger RNA (tmRNA), required for stable association of tmRNA with ribosomes. tmRNA and SmpB together mimic tRNA shape, replacing the anticodon stem-loop with SmpB. tmRNA is encoded by the ssrA gene; the 2 termini fold to resemble tRNA(Ala) and it encodes a 'tag peptide', a short internal open reading frame. During trans-translation Ala-aminoacylated tmRNA acts like a tRNA, entering the A-site of stalled ribosomes, displacing the stalled mRNA. The ribosome then switches to translate the ORF on the tmRNA; the nascent peptide is terminated with the 'tag peptide' encoded by the tmRNA and targeted for degradation. The ribosome is freed to recommence translation, which seems to be the essential function of trans-translation. The sequence is that of SsrA-binding protein from Levilactobacillus brevis (strain ATCC 367 / BCRC 12310 / CIP 105137 / JCM 1170 / LMG 11437 / NCIMB 947 / NCTC 947) (Lactobacillus brevis).